A 471-amino-acid polypeptide reads, in one-letter code: Ribulose bisphosphate carboxylase large chain (471 aa).

Residues asparagine 115 and threonine 165 each coordinate substrate. The Proton acceptor role is filled by lysine 167. Lysine 169 serves as a coordination point for substrate. Lysine 193, aspartate 195, and glutamate 196 together coordinate Mg(2+). An N6-carboxylysine modification is found at lysine 193. Histidine 286 (proton acceptor) is an active-site residue. Positions 287, 319, and 371 each coordinate substrate.

Belongs to the RuBisCO large chain family. Type I subfamily. As to quaternary structure, heterohexadecamer of 8 large chains and 8 small chains. Mg(2+) is required as a cofactor.

It localises to the carboxysome. The catalysed reaction is 2 (2R)-3-phosphoglycerate + 2 H(+) = D-ribulose 1,5-bisphosphate + CO2 + H2O. The enzyme catalyses D-ribulose 1,5-bisphosphate + O2 = 2-phosphoglycolate + (2R)-3-phosphoglycerate + 2 H(+). In terms of biological role, ruBisCO catalyzes two reactions: the carboxylation of D-ribulose 1,5-bisphosphate, the primary event in carbon dioxide fixation, as well as the oxidative fragmentation of the pentose substrate in the photorespiration process. Both reactions occur simultaneously and in competition at the same active site. The polypeptide is Ribulose bisphosphate carboxylase large chain (Synechococcus sp. (strain RCC307)).